We begin with the raw amino-acid sequence, 377 residues long: Membrane protein MLC1 (377 aa).

A compositionally biased stretch (basic and acidic residues) spans 1 to 23; the sequence is MTQEPFREELAYDRMPTLERGRQ. A disordered region spans residues 1-36; the sequence is MTQEPFREELAYDRMPTLERGRQDPASYAPDAKPSD. Transmembrane regions (helical) follow at residues 52–72, 82–100, 111–131, and 144–164; these read WVFS…SLYL, YLRC…SFTV, FQIL…WFGC, and FNLI…IIAA. Residues Ser177 and Ser179 each carry the phosphoserine modification. Transmembrane regions (helical) follow at residues 199–219, 230–250, 257–277, and 304–324; these read SVVE…ALNV, VTFF…HVAA, LVEV…TASG, and LLLL…GTAI.

Interacts with ATP1B1. Part of a complex containing ATP1B1, TRPV4, AQP4 and HEPACAM. In terms of tissue distribution, expressed in the brain, with highest levels found in the amygdala, nucleus caudatus, thalamus and hippocampus.

The protein resides in the membrane. The protein localises to the cell membrane. It localises to the cytoplasm. Its subcellular location is the perinuclear region. It is found in the endoplasmic reticulum. Transmembrane protein mainly expressed in brain astrocytes that may play a role in transport across the blood-brain and brain-cerebrospinal fluid barriers. Regulates the response of astrocytes to hypo-osmosis by promoting calcium influx. May function as regulatory protein of membrane protein complexes such as ion channels. The chain is Membrane protein MLC1 from Homo sapiens (Human).